Consider the following 118-residue polypeptide: Inner membrane protein YhaI (118 aa).

At 1 to 25 the chain is on the periplasmic side; that stretch reads MQWYLSVLKNYVGFSGRARRKEYWM. Residues 26–46 form a helical membrane-spanning segment; the sequence is FTLINAIVGAIINVIQLILGL. Residue E47 is a topological domain, cytoplasmic. The chain crosses the membrane as a helical span at residues 48–68; it reads LPYLSMLYLLATFLPVLALAI. Residues 69–77 lie on the Periplasmic side of the membrane; that stretch reads RRLHDTDRS. The helical transmembrane segment at 78–98 threads the bilayer; the sequence is GAWALLFFVPFIGWLVLLVFF. Topologically, residues 99 to 118 are cytoplasmic; that stretch reads CTEGTSGSNRYGNDPKFGSN.

The protein to E.coli YhaH.

It is found in the cell inner membrane. The sequence is that of Inner membrane protein YhaI (yhaI) from Escherichia coli O157:H7.